The sequence spans 102 residues: Co-chaperonin GroES (102 aa).

The protein belongs to the GroES chaperonin family. Heptamer of 7 subunits arranged in a ring. Interacts with the chaperonin GroEL.

It localises to the cytoplasm. In terms of biological role, together with the chaperonin GroEL, plays an essential role in assisting protein folding. The GroEL-GroES system forms a nano-cage that allows encapsulation of the non-native substrate proteins and provides a physical environment optimized to promote and accelerate protein folding. GroES binds to the apical surface of the GroEL ring, thereby capping the opening of the GroEL channel. The chain is Co-chaperonin GroES from Chlamydia felis (strain Fe/C-56) (Chlamydophila felis).